We begin with the raw amino-acid sequence, 587 residues long: Zinc finger protein 496 (587 aa).

The disordered stretch occupies residues 1-40 (MPTALCPRVLAPKESEEPRKMRSPPGENPSPQGELPSPES). Over residues 11 to 20 (APKESEEPRK) the composition is skewed to basic and acidic residues. Lys13 is covalently cross-linked (Glycyl lysine isopeptide (Lys-Gly) (interchain with G-Cter in SUMO2)). The SCAN box domain maps to 42–124 (RRLFRRFRYQ…AAVEALEREP (83 aa)). Ser185 carries the phosphoserine modification. The KRAB domain occupies 221–291 (SPFKDMILCF…ELQDLQGKEV (71 aa)). The segment at 260 to 282 (PPNDLAAQPDLSQGEENEPRVPE) is disordered. Residue Ser299 is modified to Phosphoserine. Positions 358 to 399 (SSSGDEDSQHGPYCTEELGSPTEKQRSLPASHRSSTEAGGEV) are disordered. The span at 389 to 399 (HRSSTEAGGEV) shows a compositional bias: polar residues. Lys403 is covalently cross-linked (Glycyl lysine isopeptide (Lys-Gly) (interchain with G-Cter in SUMO2)). Residues 406-428 (YVCPNCGKIFRWRVNFIRHLRSR) form a C2H2-type 1; degenerate zinc finger. C2H2-type zinc fingers lie at residues 435–457 (HECS…LESH) and 463–485 (YRCG…RRIH). Residues 488–513 (PDRLQPVEKREQAASEDADKGPKEPL) form a disordered region. Residue Lys496 forms a Glycyl lysine isopeptide (Lys-Gly) (interchain with G-Cter in SUMO2) linkage. 2 consecutive C2H2-type zinc fingers follow at residues 522–545 (FQCC…SHFH) and 553–575 (FQCR…ERLH).

It belongs to the krueppel C2H2-type zinc-finger protein family. As to quaternary structure, interacts (via zinc-fingers) with JARID2. Interacts with NSD1.

The protein localises to the nucleus. Its function is as follows. DNA-binding transcription factor that can both act as an activator and a repressor. This Homo sapiens (Human) protein is Zinc finger protein 496 (ZNF496).